Reading from the N-terminus, the 160-residue chain is Transcription elongation factor GreA (160 aa).

Positions 1 to 72 (MAEKTYPMTL…QISSLETKIR (72 aa)) form a coiled coil.

The protein belongs to the GreA/GreB family.

Its function is as follows. Necessary for efficient RNA polymerase transcription elongation past template-encoded arresting sites. The arresting sites in DNA have the property of trapping a certain fraction of elongating RNA polymerases that pass through, resulting in locked ternary complexes. Cleavage of the nascent transcript by cleavage factors such as GreA or GreB allows the resumption of elongation from the new 3'terminus. GreA releases sequences of 2 to 3 nucleotides. The polypeptide is Transcription elongation factor GreA (Streptococcus pneumoniae serotype 4 (strain ATCC BAA-334 / TIGR4)).